The following is a 172-amino-acid chain: Peptidyl-prolyl cis-trans isomerase (172 aa).

Positions 7–170 (FFDMSVGGQP…KKVVVEDCGQ (164 aa)) constitute a PPIase cyclophilin-type domain.

The protein belongs to the cyclophilin-type PPIase family. In terms of processing, not glycosylated. As to expression, expressed in pollen.

It is found in the cytoplasm. The catalysed reaction is [protein]-peptidylproline (omega=180) = [protein]-peptidylproline (omega=0). Binds cyclosporin A (CsA). CsA mediates some of its effects via an inhibitory action on PPIase. Functionally, PPIases accelerate the folding of proteins. It catalyzes the cis-trans isomerization of proline imidic peptide bonds in oligopeptides. The polypeptide is Peptidyl-prolyl cis-trans isomerase (PCKR1) (Catharanthus roseus (Madagascar periwinkle)).